A 634-amino-acid chain; its full sequence is Sodium-dependent multivitamin transporter (634 aa).

The next 12 membrane-spanning stretches (helical) occupy residues Phe-23 to Leu-43, Met-65 to Leu-85, Phe-100 to Phe-120, Ile-142 to Ala-162, Leu-175 to Leu-195, Leu-207 to Leu-227, Phe-255 to Ala-275, Ala-295 to Phe-315, Leu-350 to Phe-370, Phe-403 to Leu-423, Leu-427 to Phe-447, and Ala-455 to Val-475. N-linked (GlcNAc...) asparagine glycans are attached at residues Asn-488 and Asn-497. A helical membrane pass occupies residues Leu-526–Leu-546.

It belongs to the sodium:solute symporter (SSF) (TC 2.A.21) family. As to quaternary structure, interacts with PDZD11. As to expression, expressed in the intestinal mucosa, liver and kidney (at protein level). Expressed in the colon.

Its subcellular location is the cell membrane. It is found in the apical cell membrane. It catalyses the reaction biotin(out) + 2 Na(+)(out) = biotin(in) + 2 Na(+)(in). The catalysed reaction is (R)-pantothenate(out) + 2 Na(+)(out) = (R)-pantothenate(in) + 2 Na(+)(in). The enzyme catalyses (R)-lipoate(out) + 2 Na(+)(out) = (R)-lipoate(in) + 2 Na(+)(in). It carries out the reaction iodide(out) + 2 Na(+)(out) = iodide(in) + 2 Na(+)(in). In terms of biological role, sodium-dependent multivitamin transporter that mediates the electrogenic transport of pantothenate, biotin, lipoate and iodide. Functions as a Na(+)-coupled substrate symporter where the stoichiometry of Na(+):substrate is 2:1, creating an electrochemical Na(+) gradient used as driving force for substrate uptake. Required for biotin and pantothenate uptake in the intestine across the brush border membrane. Plays a role in the maintenance of intestinal mucosa integrity, by providing the gut mucosa with biotin. Contributes to the luminal uptake of biotin and pantothenate into the brain across the blood-brain barrier. This Mus musculus (Mouse) protein is Sodium-dependent multivitamin transporter.